The chain runs to 40 residues: Chitin-binding protein 4 (40 aa).

N-glycosylated.

Functionally, chitin-binding protein. Has antifungal activity against C.krusei, C.albicans, C.tropicalis and C.parapsilosis. Has antinociceptive and anti-inflammatory activity in mice. This is Chitin-binding protein 4 from Moringa oleifera (Horseradish tree).